Reading from the N-terminus, the 320-residue chain is Aurora kinase B (320 aa).

The span at 1-10 (MQNKENREPR) shows a compositional bias: basic and acidic residues. The segment at 1–38 (MQNKENREPRVQQTPSAGVGPLRVEMNPDTHAVSGPGR) is disordered. In terms of domain architecture, Protein kinase spans 53–303 (FDIGRPLGKG…LRSVMEHPWV (251 aa)). ATP contacts are provided by residues 59-67 (LGKGKFGNV) and Lys82. Residue Asp176 is the Proton acceptor of the active site.

This sequence belongs to the protein kinase superfamily. Ser/Thr protein kinase family. Aurora subfamily. Component of the chromosomal passenger complex (CPC).

It is found in the nucleus. It localises to the chromosome. The protein resides in the centromere. Its subcellular location is the cytoplasm. The protein localises to the cytoskeleton. It is found in the spindle. It localises to the midbody. The catalysed reaction is L-seryl-[protein] + ATP = O-phospho-L-seryl-[protein] + ADP + H(+). The enzyme catalyses L-threonyl-[protein] + ATP = O-phospho-L-threonyl-[protein] + ADP + H(+). Kinase activity is stimulated by cell-cycle specific phosphorylation. In terms of biological role, serine/threonine-protein kinase component of the chromosomal passenger complex (CPC), a complex that acts as a key regulator of mitosis. The CPC complex has essential functions at the centromere in ensuring correct chromosome alignment and segregation and is required for chromatin-induced microtubule stabilization and spindle assembly. Involved in the bipolar attachment of spindle microtubules to kinetochores and is a key regulator for the onset of cytokinesis during mitosis. Required for central/midzone spindle assembly and cleavage furrow formation. Key component of the cytokinesis checkpoint, a process required to delay abscission to prevent both premature resolution of intercellular chromosome bridges and accumulation of DNA damage. Phosphorylates 'Ser-10' of histone H3 during mitosis. The sequence is that of Aurora kinase B (aurkb) from Danio rerio (Zebrafish).